A 430-amino-acid chain; its full sequence is Potassium channel subfamily K member 12 (430 aa).

At 1 to 38 (MSSRSPRPPPRRCRRRLPRPSCCCCCCRRSHLNEDTGR) the chain is on the cytoplasmic side. Residues 11–16 (RRCRRR) are ER retention/retrieval signal. A helical transmembrane segment spans residues 39–59 (FVLLAALIGLYLVAGATVFSA). Asn78 carries N-linked (GlcNAc...) asparagine glycosylation. An intramembrane region (pore-forming) is located at residues 114-134 (WDFPGAFYFVGTVVSTIGFGM). The K(+) site is built by Thr129, Ile130, and Gly131. The interval 129 to 134 (TIGFGM) is selectivity filter 1. Residues 145–165 (FLIAYGLFGCAGTILFFNLFL) form a helical membrane-spanning segment. At 166-212 (ERIISLLAFIMRACRERQLRRSGLLPATFRRGSALSEADSLAGWKPS) the chain is on the cytoplasmic side. A helical membrane pass occupies residues 213–233 (VYHVLLILGLFAVLLACCASA). The segment at residues 243-263 (YVDSLYFCFVTFSTIGFGDLV) is an intramembrane region (pore-forming). Positions 256, 257, 258, and 259 each coordinate K(+). The selectivity filter 2 stretch occupies residues 256–261 (TIGFGD). Residues 282 to 302 (LFILLGVCCIYSLFNVISILI) traverse the membrane as a helical segment. At 303–430 (KQVLNWMLRK…NRLAETSASR (128 aa)) the chain is on the cytoplasmic side.

Belongs to the two pore domain potassium channel (TC 1.A.1.8) family. Homodimer. Heterodimer with KCNK13. As to expression, highly expressed in most brain regions. Also expressed in other tissues such as lung, kidney, liver, stomach and spleen.

The protein resides in the cell membrane. The protein localises to the endoplasmic reticulum membrane. The catalysed reaction is K(+)(in) = K(+)(out). Functionally, k(+) channel subunit that may homo- and heterodimerize to form functional channels with distinct regulatory and gating properties. Can heterodimerize with KCNK13 subunit to conduct K(+) outward rectifying currents at the plasma membrane. The homodimers are mainly retained in the endoplasmic reticulum compartment and may be targeted to the cell surface upon phosphorylation or other activation signals yet to be elucidated. This is Potassium channel subfamily K member 12 (Kcnk12) from Rattus norvegicus (Rat).